The chain runs to 538 residues: Phosphoenolpyruvate carboxykinase (ATP) (538 aa).

Residues R64, Y205, and K211 each coordinate substrate. Residues K211, H230, and 246-254 (GLSGTGKTT) each bind ATP. Mn(2+) contacts are provided by K211 and H230. Mn(2+) is bound at residue D267. ATP-binding positions include E295, R331, 447–448 (RI), and T453. Residue R331 participates in substrate binding.

This sequence belongs to the phosphoenolpyruvate carboxykinase (ATP) family. In terms of assembly, monomer. Requires Mn(2+) as cofactor.

Its subcellular location is the cytoplasm. It catalyses the reaction oxaloacetate + ATP = phosphoenolpyruvate + ADP + CO2. It participates in carbohydrate biosynthesis; gluconeogenesis. Functionally, involved in the gluconeogenesis. Catalyzes the conversion of oxaloacetate (OAA) to phosphoenolpyruvate (PEP) through direct phosphoryl transfer between the nucleoside triphosphate and OAA. The protein is Phosphoenolpyruvate carboxykinase (ATP) of Pasteurella multocida (strain Pm70).